Here is a 589-residue protein sequence, read N- to C-terminus: Probable methyltransferase PMT23 (589 aa).

The Cytoplasmic segment spans residues 1–4; it reads MAIS. Residues 5 to 25 traverse the membrane as a helical; Signal-anchor for type II membrane protein segment; that stretch reads VQHVVVLLLSTLLIAITFFLF. The Lumenal portion of the chain corresponds to 26 to 589; it reads TSDNARFPFP…FWRPAKPELR (564 aa). Residues asparagine 70, asparagine 375, and asparagine 442 are each glycosylated (N-linked (GlcNAc...) asparagine).

It belongs to the methyltransferase superfamily.

Its subcellular location is the golgi apparatus membrane. The protein is Probable methyltransferase PMT23 of Arabidopsis thaliana (Mouse-ear cress).